Here is a 297-residue protein sequence, read N- to C-terminus: Manganese efflux system protein MneP (297 aa).

6 consecutive transmembrane segments (helical) span residues 12-32 (VALIALIANLILMAGKVFFGL), 43-63 (GIHSAADVVASIAVLAVIGIS), 85-105 (IVGIILVIVSVYILIEAILSF), 111-131 (VPQYSALFAALISYVAKEILY), 155-175 (GDIVASLAAFIGVLLAIIGNS), and 177-197 (GWSYLLYADAIASAIVAYLIF).

Belongs to the cation diffusion facilitator (CDF) transporter (TC 2.A.4) family.

Its subcellular location is the cell membrane. Primary efflux pump for manganese. May prevent manganese intoxication. The protein is Manganese efflux system protein MneP of Bacillus subtilis (strain 168).